Consider the following 330-residue polypeptide: Beta-ketoacyl-[acyl-carrier-protein] synthase III (330 aa).

Catalysis depends on residues C114 and H255. The segment at 256–260 (QANQR) is ACP-binding. Residue N285 is part of the active site.

This sequence belongs to the thiolase-like superfamily. FabH family. As to quaternary structure, homodimer.

The protein localises to the cytoplasm. The catalysed reaction is malonyl-[ACP] + acetyl-CoA + H(+) = 3-oxobutanoyl-[ACP] + CO2 + CoA. Its pathway is lipid metabolism; fatty acid biosynthesis. In terms of biological role, catalyzes the condensation reaction of fatty acid synthesis by the addition to an acyl acceptor of two carbons from malonyl-ACP. Catalyzes the first condensation reaction which initiates fatty acid synthesis and may therefore play a role in governing the total rate of fatty acid production. Possesses both acetoacetyl-ACP synthase and acetyl transacylase activities. Its substrate specificity determines the biosynthesis of branched-chain and/or straight-chain of fatty acids. This chain is Beta-ketoacyl-[acyl-carrier-protein] synthase III, found in Nostoc sp. (strain PCC 7120 / SAG 25.82 / UTEX 2576).